A 438-amino-acid chain; its full sequence is Indole diterpene prenyltransferase janD (438 aa).

80–81 (FM) serves as a coordination point for L-tryptophan. The substrate site is built by R102, K190, R264, K266, Y268, Y350, Y414, and Y418.

This sequence belongs to the tryptophan dimethylallyltransferase family.

It functions in the pathway secondary metabolite biosynthesis. Its function is as follows. Indole diterpene prenyltransferase; part of the gene cluster that mediates the biosynthesis of the indole diterpenes janthitremanes such as shearinine K or shearinine A. The geranylgeranyl diphosphate (GGPP) synthase janG catalyzes the first step in janthitremane biosynthesis via conversion of farnesyl pyrophosphate and isopentyl pyrophosphate into geranylgeranyl pyrophosphate (GGPP). Condensation of indole-3-glycerol phosphate with GGPP by the prenyl transferase janC then forms 3-geranylgeranylindole (3-GGI). Epoxidation by the FAD-dependent monooxygenase janM leads to a epoxidized-GGI that is substrate of the terpene cyclase janB for cyclization to yield paspaline. Paspaline is subsequently converted to 13-desoxypaspaline by the cytochrome P450 monooxygenase janP, via beta-PC-M6 in a series of alpha-face oxidations. The cytochrome P450 monooxygenase janQ is proposed to carry out sequential beta-face oxidation steps at C-7 and C-13 of 13-desoxypaspaline to form paspalicine and paspalinine respectively. The indole diterpene prenyltransferase janD may then convert paspalinine into shearinine K which is substrate of janO and/or additional enzymes for oxidation and cyclization to generate shearinine A. This is Indole diterpene prenyltransferase janD from Penicillium janthinellum (Penicillium vitale).